A 377-amino-acid polypeptide reads, in one-letter code: uncharacterized protein (377 aa).

The signal sequence occupies residues 1–22 (MKFKYGTVVLGSFLGLSVVLAA). A lipid anchor (N-palmitoyl cysteine) is attached at C23. A lipid anchor (S-diacylglycerol cysteine) is attached at C23. The interval 217 to 260 (AKANGETNQKGRKAAKSNKTALVQLKNGADTTTNEENKDTKTSD) is disordered. Residues 251-260 (EENKDTKTSD) are compositionally biased toward basic and acidic residues.

The protein belongs to the MG185/MG260 family.

Its subcellular location is the cell membrane. This is an uncharacterized protein from Mycoplasma pneumoniae (strain ATCC 29342 / M129 / Subtype 1) (Mycoplasmoides pneumoniae).